The sequence spans 177 residues: Large ribosomal subunit protein uL6 (177 aa).

This sequence belongs to the universal ribosomal protein uL6 family. In terms of assembly, part of the 50S ribosomal subunit.

Its function is as follows. This protein binds to the 23S rRNA, and is important in its secondary structure. It is located near the subunit interface in the base of the L7/L12 stalk, and near the tRNA binding site of the peptidyltransferase center. This is Large ribosomal subunit protein uL6 from Acinetobacter baylyi (strain ATCC 33305 / BD413 / ADP1).